Reading from the N-terminus, the 308-residue chain is ATP synthase gamma chain (308 aa).

It belongs to the ATPase gamma chain family. In terms of assembly, F-type ATPases have 2 components, CF(1) - the catalytic core - and CF(0) - the membrane proton channel. CF(1) has five subunits: alpha(3), beta(3), gamma(1), delta(1), epsilon(1). CF(0) has three main subunits: a, b and c.

Its subcellular location is the cell membrane. Its function is as follows. Produces ATP from ADP in the presence of a proton gradient across the membrane. The gamma chain is believed to be important in regulating ATPase activity and the flow of protons through the CF(0) complex. The sequence is that of ATP synthase gamma chain from Mycobacteroides abscessus (strain ATCC 19977 / DSM 44196 / CCUG 20993 / CIP 104536 / JCM 13569 / NCTC 13031 / TMC 1543 / L948) (Mycobacterium abscessus).